Here is a 156-residue protein sequence, read N- to C-terminus: Small ribosomal subunit protein uS7 (156 aa).

It belongs to the universal ribosomal protein uS7 family. In terms of assembly, part of the 30S ribosomal subunit. Contacts proteins S9 and S11.

Functionally, one of the primary rRNA binding proteins, it binds directly to 16S rRNA where it nucleates assembly of the head domain of the 30S subunit. Is located at the subunit interface close to the decoding center, probably blocks exit of the E-site tRNA. The chain is Small ribosomal subunit protein uS7 from Rhizobium meliloti (strain 1021) (Ensifer meliloti).